The sequence spans 472 residues: RNA pseudouridine synthase 6, chloroplastic (472 aa).

Residues 1 to 66 (MASPALTGGY…TDSQNQTTLS (66 aa)) constitute a chloroplast transit peptide. Residues 101-208 (VLVSEFISKQ…SPRCYEIDWK (108 aa)) form the S4 RNA-binding domain. The active site involves Asp-261.

Belongs to the pseudouridine synthase RluA family.

Its subcellular location is the plastid. The protein localises to the chloroplast. The enzyme catalyses a uridine in RNA = a pseudouridine in RNA. The polypeptide is RNA pseudouridine synthase 6, chloroplastic (Arabidopsis thaliana (Mouse-ear cress)).